The following is a 234-amino-acid chain: UPF0502 protein Reut_B4455 (234 aa).

This sequence belongs to the UPF0502 family.

The sequence is that of UPF0502 protein Reut_B4455 from Cupriavidus pinatubonensis (strain JMP 134 / LMG 1197) (Cupriavidus necator (strain JMP 134)).